The chain runs to 1503 residues: Transient receptor potential cation channel subfamily M member 2 (1503 aa).

A disordered region spans residues 1-20; sequence MEPSALRKAGSEQEEGFEGL. Residues 1–752 lie on the Cytoplasmic side of the membrane; that stretch reads MEPSALRKAG…WWGQLSVDNG (752 aa). ADP-D-ribose is bound by residues threonine 174, asparagine 179, arginine 302, glycine 333, and threonine 336. Threonine 740 bears the Phosphothreonine mark. An intramembrane segment occupies 753–769; sequence LWRVTLCMLAFPLLLTG. The Cytoplasmic portion of the chain corresponds to 770 to 795; sequence LISFREKRLQDVGTPAARARAFFTAP. A helical membrane pass occupies residues 796 to 816; the sequence is VVVFHLNILSYFAFLCLFAYV. Over 817–827 the chain is Extracellular; it reads LMVDFQPVPSW. Residues 828 to 848 traverse the membrane as a helical segment; that stretch reads CECAIYLWLFSLVCEEMRQLF. 2 residues coordinate Ca(2+): glutamate 843 and glutamine 846. Over 849–867 the chain is Cytoplasmic; it reads YDPDECGLMKKAALYFSDF. The helical transmembrane segment at 868 to 888 threads the bilayer; that stretch reads WNKLDVGAILLFVAGLTCRLI. Position 869 (asparagine 869) interacts with Ca(2+). Residues 889–896 lie on the Extracellular side of the membrane; that stretch reads PATLYPGR. The chain crosses the membrane as a helical span at residues 897-917; the sequence is VILSLDFILFCLRLMHIFTIS. Residues 918–929 are Cytoplasmic-facing; that stretch reads KTLGPKIIIVKR. The chain crosses the membrane as a helical span at residues 930–950; the sequence is MMKDVFFFLFLLAVWVVSFGV. The Extracellular segment spans residues 951–970; sequence AKQAILIHNERRVDWLFRGA. Residues 971 to 985 constitute an intramembrane region (pore-forming); sequence VYHSYLTIFGQIPGY. Residues 979-982 carry the Selectivity filter motif; it reads FGQI. Residues 986 to 1022 lie on the Extracellular side of the membrane; the sequence is IDGVNFNPEHCSPNGTDPYKPKCPESDATQQRPAFPE. The cysteines at positions 996 and 1008 are disulfide-linked. Residues 1023 to 1044 traverse the membrane as a helical segment; that stretch reads WLTVLLLCLYLLFTNILLLNLL. The Cytoplasmic portion of the chain corresponds to 1045–1079; sequence IAMFNYTFQQVQEHTDQIWKFQRHDLIEEYHGRPA. A Ca(2+)-binding site is contributed by glutamate 1073. Residues 1080-1098 lie within the membrane without spanning it; that stretch reads APPPFILLSHLQLFIKRVV. The Cytoplasmic portion of the chain corresponds to 1099–1503; that stretch reads LKTPAKRHKQ…KAAAEFGAHY (405 aa). The tract at residues 1206–1237 is disordered; sequence EADVPTLASQKAAEEPDAEPGGRKKTEEPGDS. In terms of domain architecture, Nudix hydrolase spans 1354–1498; the sequence is RWRRNEDGAI…KTLLQKAAAE (145 aa). ADP-D-ribose-binding residues include leucine 1381 and serine 1382. The Nudix box motif lies at 1390–1411; that stretch reads GSREPGEMLPRKLKRILRQEHW. 4 residues coordinate ADP-D-ribose: aspartate 1431, arginine 1433, tyrosine 1485, and asparagine 1487.

This sequence belongs to the transient receptor (TC 1.A.4) family. LTrpC subfamily. TRPM2 sub-subfamily. Homotetramer. Isoform 1 can interact with isoform 3. This interaction decreases Ca(2+) influx through isoform 1 and suppresses susceptibility to oxidative stress-induced cell death. Phosphorylation of TRPM2 at Thr-740 by protein kinase C (PKC) counteracts the effect of cytosolic Ca(2+) and elevates the temperature threshold. As to expression, highly expressed in brain and peripheral blood cells, such as neutrophils. Also detected in bone marrow, spleen, heart, liver and lung. Isoform 2 is found in neutrophil granulocytes.

It localises to the cell membrane. The protein localises to the perikaryon. Its subcellular location is the cell projection. The protein resides in the cytoplasmic vesicle. It is found in the lysosome. The enzyme catalyses Ca(2+)(in) = Ca(2+)(out). It carries out the reaction Na(+)(in) = Na(+)(out). With respect to regulation, activated by intracellular ADP-ribose, beta-NAD (NAD(+)) and similar compounds, and by oxidative stress caused by reactive oxygen or nitrogen species. Ca(2+) and PI(4,5)P2 are required for channel opening by ADP-ribose. Activation by ADP-ribose and beta-NAD is strongly increased by moderate heat (35 to 40 degrees Celsius). Likewise, reactive oxygen species lower the threshold for activation by moderate heat (37 degrees Celsius). Activated by moderate heat (35 to 40 degrees Celsius). Inactivated by exposure to extracellular pH between 4.0 and 6.5; irreversibly inactivated when open channels are exposed to extracellular pH between 4.0 and 6.5, while pre-exposure of closed channels to extracellular pH 5.5 gives rise to currents that rapidly inactivate, but protects against irreversible inactivation. Inactivated by intracellular ATP. Activated by arachidonic acid. Inhibited by 2-aminoethyl diphenylborinate (2-APB). Functionally, nonselective, voltage-independent cation channel that mediates Na(+) and Ca(2+) influx, leading to increased cytoplasmic Ca(2+) levels. Functions as a ligand-gated ion channel, gated by intracellular adenosine diphosphate ribose (ADP-ribose), Ca(2+), warm temperature, and oxidative stress. The precise physiological activators are under debate; the true, physiological activators may be ADP-ribose and ADP-ribose-2'-phosphate. Binding of ADP-ribose to the cytoplasmic Nudix domain causes a conformation change; the channel is primed but still requires Ca(2+) binding to trigger channel opening. Extracellular Ca(2+) passes through the channel and increases channel activity. Contributes to Ca(2+) release from intracellular stores in response to ADP-ribose. Plays a role in numerous processes that involve signaling via intracellular Ca(2+) levels. Besides, mediates the release of lysosomal Zn(2+) stores in response to reactive oxygen species, leading to increased cytosolic Zn(2+) levels. Plays a role in mediating behavorial and physiological responses to moderate heat and thereby contributes to body temperature homeostasis. Plays a role in insulin secretion, a process that requires increased cytoplasmic Ca(2+) levels. Required for normal IFNG and cytokine secretion and normal innate immune immunity in response to bacterial infection. Required for normal phagocytosis and cytokine release by macrophages exposed to zymosan (in vitro). Plays a role in dendritic cell differentiation and maturation, and in dendritic cell chemotaxis via its role in regulating cytoplasmic Ca(2+) levels. Plays a role in the regulation of the reorganization of the actin cytoskeleton and filopodia formation in response to reactive oxygen species via its role in increasing cytoplasmic Ca(2+) and Zn(2+) levels. Confers susceptibility to cell death following oxidative stress. Lacks cation channel activity. Does not mediate cation transport in response to oxidative stress or ADP-ribose. Its function is as follows. Lacks cation channel activity and negatively regulates the channel activity of isoform 1. Negatively regulates susceptibility to cell death in reposponse to oxidative stress. The chain is Transient receptor potential cation channel subfamily M member 2 (TRPM2) from Homo sapiens (Human).